Here is a 573-residue protein sequence, read N- to C-terminus: Urease subunit alpha 2 (573 aa).

The 438-residue stretch at 136–573 (GAIDAHVHLI…LPMAQRYFLF (438 aa)) folds into the Urease domain. Positions 141, 143, and 224 each coordinate Ni(2+). An N6-carboxylysine modification is found at K224. Position 226 (H226) interacts with substrate. 2 residues coordinate Ni(2+): H253 and H279. The Proton donor role is filled by H327. A Ni(2+)-binding site is contributed by D367.

Belongs to the metallo-dependent hydrolases superfamily. Urease alpha subunit family. May form a heterohexamer of 3 UreC (alpha) and 3 UreAB (gamma/beta) subunits. May also form a heterotrimer of UreA (gamma), UreB (beta) and UreC (alpha) subunits. Three heterotrimers associate to form the active enzyme. It depends on Ni cation as a cofactor. In terms of processing, carboxylation allows a single lysine to coordinate two nickel ions.

It localises to the cytoplasm. It carries out the reaction urea + 2 H2O + H(+) = hydrogencarbonate + 2 NH4(+). Its pathway is nitrogen metabolism; urea degradation; CO(2) and NH(3) from urea (urease route): step 1/1. In Streptomyces avermitilis (strain ATCC 31267 / DSM 46492 / JCM 5070 / NBRC 14893 / NCIMB 12804 / NRRL 8165 / MA-4680), this protein is Urease subunit alpha 2.